The sequence spans 455 residues: Eukaryotic translation initiation factor 3 subunit E (455 aa).

One can recognise a PCI domain in the interval 256–425 (TDLFFSPAYI…GTVIMNHPPQ (170 aa)).

This sequence belongs to the eIF-3 subunit E family. As to quaternary structure, component of the eukaryotic translation initiation factor 3 (eIF-3) complex.

It localises to the cytoplasm. Its function is as follows. Component of the eukaryotic translation initiation factor 3 (eIF-3) complex, which is involved in protein synthesis of a specialized repertoire of mRNAs and, together with other initiation factors, stimulates binding of mRNA and methionyl-tRNAi to the 40S ribosome. The eIF-3 complex specifically targets and initiates translation of a subset of mRNAs involved in cell proliferation. The protein is Eukaryotic translation initiation factor 3 subunit E (int6) of Neosartorya fischeri (strain ATCC 1020 / DSM 3700 / CBS 544.65 / FGSC A1164 / JCM 1740 / NRRL 181 / WB 181) (Aspergillus fischerianus).